Consider the following 490-residue polypeptide: Probable cytosol aminopeptidase (490 aa).

2 residues coordinate Mn(2+): lysine 257 and aspartate 262. Lysine 269 is an active-site residue. Mn(2+)-binding residues include aspartate 281, aspartate 341, and glutamate 343. Arginine 345 is a catalytic residue.

It belongs to the peptidase M17 family. It depends on Mn(2+) as a cofactor.

The protein resides in the cytoplasm. The catalysed reaction is Release of an N-terminal amino acid, Xaa-|-Yaa-, in which Xaa is preferably Leu, but may be other amino acids including Pro although not Arg or Lys, and Yaa may be Pro. Amino acid amides and methyl esters are also readily hydrolyzed, but rates on arylamides are exceedingly low.. It carries out the reaction Release of an N-terminal amino acid, preferentially leucine, but not glutamic or aspartic acids.. In terms of biological role, presumably involved in the processing and regular turnover of intracellular proteins. Catalyzes the removal of unsubstituted N-terminal amino acids from various peptides. The polypeptide is Probable cytosol aminopeptidase (Prochlorococcus marinus (strain MIT 9312)).